We begin with the raw amino-acid sequence, 225 residues long: Thymidylate kinase (225 aa).

10–17 (GIDGAGKS) serves as a coordination point for ATP.

Belongs to the thymidylate kinase family.

The catalysed reaction is dTMP + ATP = dTDP + ADP. In terms of biological role, phosphorylation of dTMP to form dTDP in both de novo and salvage pathways of dTTP synthesis. This is Thymidylate kinase from Polaromonas sp. (strain JS666 / ATCC BAA-500).